Here is a 166-residue protein sequence, read N- to C-terminus: Probable glucosamine 6-phosphate N-acetyltransferase 2 (166 aa).

The 146-residue stretch at 21-166 (VQIRRLEATD…EKGVQMAIYF (146 aa)) folds into the N-acetyltransferase domain. Substrate-binding positions include S43, 93–96 (KFLR), and 105–107 (EDV). Acetyl-CoA is bound at residue 115–120 (GRGLGL). Substrate is bound at residue 136–137 (YK). Position 150-152 (150-152 (YAK)) interacts with acetyl-CoA.

Belongs to the acetyltransferase family. GNA1 subfamily. In terms of assembly, homodimer.

The protein resides in the endoplasmic reticulum membrane. It carries out the reaction D-glucosamine 6-phosphate + acetyl-CoA = N-acetyl-D-glucosamine 6-phosphate + CoA + H(+). Its pathway is nucleotide-sugar biosynthesis; UDP-N-acetyl-alpha-D-glucosamine biosynthesis; N-acetyl-alpha-D-glucosamine 1-phosphate from alpha-D-glucosamine 6-phosphate (route I): step 1/2. Functionally, acetyltransferase involved in UDP-N-acetylglucosamine (UDP-GlcNAc) biosynthesis. UDP-GlcNAc is an essential metabolite that serves as an initial sugar donor of N-glycan synthesis and thus plays an important role in protein and lipid glycosylation. The sequence is that of Probable glucosamine 6-phosphate N-acetyltransferase 2 from Oryza sativa subsp. japonica (Rice).